The chain runs to 338 residues: Glyceraldehyde-3-phosphate dehydrogenase, cytosolic (338 aa).

A binding to NAD region spans residues 2–153 (ADKKIKIGIN…YKSDLNIVSN (152 aa)). NAD(+)-binding positions include 15 to 16 (RI) and aspartate 37. Residues 56–75 (GQWKHNELKVKDEKTLLFGE) are external loop. An NAD(+)-binding site is contributed by arginine 84. Residues 154–338 (ASCTTNCLAP…VDLIIHMSKA (185 aa)) are catalytic. A D-glyceraldehyde 3-phosphate-binding site is contributed by 155-157 (SCT). The active-site Nucleophile is cysteine 156. Cysteine 156 and cysteine 160 each carry S-nitrosocysteine. The S-loop stretch occupies residues 183 to 206 (HSITATQKTVDGPSMKDWRGGRAA). D-glyceraldehyde 3-phosphate-binding positions include threonine 186, 215-216 (TG), and arginine 238. Asparagine 320 serves as a coordination point for NAD(+).

The protein belongs to the glyceraldehyde-3-phosphate dehydrogenase family. As to quaternary structure, homotetramer.

It localises to the cytoplasm. The catalysed reaction is D-glyceraldehyde 3-phosphate + phosphate + NAD(+) = (2R)-3-phospho-glyceroyl phosphate + NADH + H(+). The protein operates within carbohydrate degradation; glycolysis; pyruvate from D-glyceraldehyde 3-phosphate: step 1/5. In terms of biological role, key enzyme in glycolysis that catalyzes the first step of the pathway by converting D-glyceraldehyde 3-phosphate (G3P) into 3-phospho-D-glyceroyl phosphate. Essential for the maintenance of cellular ATP levels and carbohydrate metabolism. The protein is Glyceraldehyde-3-phosphate dehydrogenase, cytosolic (GAPC) of Sinapis alba (White mustard).